The following is a 427-amino-acid chain: ATP-dependent RNA helicase DDX39A (427 aa).

The span at 1–19 (MAEQDVENELLDYDEDEEP) shows a compositional bias: acidic residues. Residues 1-35 (MAEQDVENELLDYDEDEEPQVPQESTPAPPKKDVK) are disordered. Residue A2 is modified to N-acetylalanine. K31 is covalently cross-linked (Glycyl lysine isopeptide (Lys-Gly) (interchain with G-Cter in SUMO2)). K35 bears the N6-acetyllysine; alternate mark. A Glycyl lysine isopeptide (Lys-Gly) (interchain with G-Cter in SUMO2); alternate cross-link involves residue K35. The residue at position 37 (S37) is a Phosphoserine. The short motif at 44–72 (SGFRDFLLKPELLRAIVDCGFEHPSEVQH) is the Q motif element. One can recognise a Helicase ATP-binding domain in the interval 75-248 (IPQAILGMDV…RKFMQDPMEV (174 aa)). 88–95 (AKSGMGKT) contributes to the ATP binding site. Glycyl lysine isopeptide (Lys-Gly) (interchain with G-Cter in SUMO2) cross-links involve residues K154 and K162. T171 is subject to Phosphothreonine. Residues 195–198 (DECD) carry the DECD box motif. Residues K240 and K255 each participate in a glycyl lysine isopeptide (Lys-Gly) (interchain with G-Cter in SUMO2) cross-link. A Helicase C-terminal domain is found at 260–421 (GLQQYYVKLK…ELPEEIDIST (162 aa)). Position 426 is a phosphoserine (S426).

The protein belongs to the DEAD box helicase family. DECD subfamily. In terms of assembly, binds ALYREF/THOC4 and DDX39B/BAT1. Interacts with the apo-AREX complex component SARNP. Interacts with MX1. Interacts with MCM3AP isoform GANP. Interacts with ECD. Interacts with PHAX; this interaction stimulates PHAX RNA binding activity. In terms of processing, SUMOylated by RANBP2; SUMOylation modification affects its ability to bind RNA.

The protein localises to the nucleus. It is found in the cytoplasm. The catalysed reaction is ATP + H2O = ADP + phosphate + H(+). In terms of biological role, helicase that plays an essential role in mRNA export and is involved in multiple steps in RNA metabolism including alternative splicing. Regulates nuclear mRNA export to the cytoplasm through association with ECD. Also involved in spliceosomal uridine-rich small nuclear RNA (U snRNA) export by stimulating the RNA binding of adapter PHAX. Plays a role in the negative regulation of type I IFN production by increasing the nuclear retention of antiviral transcripts and thus reducing their protein expression. Independently of the interferon pathway, plays an antiviral role against alphaviruses by binding to a 5' conserved sequence element in the viral genomic RNA. In Rattus norvegicus (Rat), this protein is ATP-dependent RNA helicase DDX39A (Ddx39a).